The following is a 377-amino-acid chain: Pulmonary surfactant-associated protein B (377 aa).

The first 22 residues, 1 to 22 (MAKSHLLQWLLLLPTLCCPGAA), serve as a signal peptide directing secretion. A propeptide spanning residues 23-191 (ITSASSLECA…PHTQDFSEQQ (169 aa)) is cleaved from the precursor. The Saposin A-type domain maps to 24–64 (TSASSLECAQGPQFWCQSLEHAVQCRALGHCLQEVWGHAGA). Saposin B-type domains follow at residues 64 to 146 (ANDL…PRGQ), 195 to 272 (PLPF…STED), and 291 to 366 (QDTE…EAPA). Disulfide bonds link cysteine 68-cysteine 142, cysteine 71-cysteine 136, cysteine 99-cysteine 111, cysteine 199-cysteine 268, cysteine 202-cysteine 262, cysteine 226-cysteine 237, cysteine 295-cysteine 362, cysteine 298-cysteine 356, and cysteine 321-cysteine 331. Residues 271–377 (EDAMGPALPA…PLQCFQTPHL (107 aa)) constitute a propeptide that is removed on maturation. Residue asparagine 307 is glycosylated (N-linked (GlcNAc...) asparagine).

As to quaternary structure, homodimer; disulfide-linked.

It localises to the secreted. Its subcellular location is the extracellular space. It is found in the surface film. Functionally, pulmonary surfactant-associated proteins promote alveolar stability by lowering the surface tension at the air-liquid interface in the peripheral air spaces. SP-B increases the collapse pressure of palmitic acid to nearly 70 millinewtons per meter. The polypeptide is Pulmonary surfactant-associated protein B (Sftpb) (Mus musculus (Mouse)).